The following is a 121-amino-acid chain: Dihydroneopterin aldolase (121 aa).

Residues E22, Y54, and 73–74 contribute to the substrate site; that span reads LE. Catalysis depends on K100, which acts as the Proton donor/acceptor.

Belongs to the DHNA family. As to quaternary structure, homooctamer. Four molecules assemble into a ring, and two rings come together to give a cylinder with a hole of at least 13 a diameter.

It catalyses the reaction 7,8-dihydroneopterin = 6-hydroxymethyl-7,8-dihydropterin + glycolaldehyde. The enzyme catalyses 7,8-dihydroneopterin = 7,8-dihydromonapterin. It functions in the pathway cofactor biosynthesis; tetrahydrofolate biosynthesis; 2-amino-4-hydroxy-6-hydroxymethyl-7,8-dihydropteridine diphosphate from 7,8-dihydroneopterin triphosphate: step 3/4. Functionally, catalyzes the conversion of 7,8-dihydroneopterin to 6-hydroxymethyl-7,8-dihydropterin. Can also catalyze the epimerization of carbon 2' of dihydroneopterin to dihydromonapterin. This Staphylococcus aureus (strain COL) protein is Dihydroneopterin aldolase (folB).